The following is a 278-amino-acid chain: uncharacterized protein (278 aa).

The region spanning 1–55 (MKIRERFSMVDLPVLIITAAIIGHDKYKAFHAGANDILQKPYHYSEFMARIQNLI) is the Response regulatory domain.

This is an uncharacterized protein from Bacillus subtilis (strain 168).